Here is a 284-residue protein sequence, read N- to C-terminus: tRNA-splicing endonuclease (284 aa).

Catalysis depends on residues Tyr-222, His-229, and Lys-257.

This sequence belongs to the tRNA-intron endonuclease family. Archaeal long subfamily. In terms of assembly, homodimer.

It catalyses the reaction pretRNA = a 3'-half-tRNA molecule with a 5'-OH end + a 5'-half-tRNA molecule with a 2',3'-cyclic phosphate end + an intron with a 2',3'-cyclic phosphate and a 5'-hydroxyl terminus.. Endonuclease that removes tRNA introns. Cleaves pre-tRNA at the 5'- and 3'-splice sites to release the intron. The products are an intron and two tRNA half-molecules bearing 2',3' cyclic phosphate and 5'-OH termini. Recognizes a pseudosymmetric substrate in which 2 bulged loops of 3 bases are separated by a stem of 4 bp. The polypeptide is tRNA-splicing endonuclease (Picrophilus torridus (strain ATCC 700027 / DSM 9790 / JCM 10055 / NBRC 100828 / KAW 2/3)).